A 184-amino-acid chain; its full sequence is Protein Syd (184 aa).

It belongs to the Syd family.

Its subcellular location is the cell inner membrane. In terms of biological role, interacts with the SecY protein in vivo. May bind preferentially to an uncomplexed state of SecY, thus functioning either as a chelating agent for excess SecY in the cell or as a regulatory factor that negatively controls the translocase function. This Photobacterium profundum (strain SS9) protein is Protein Syd.